The sequence spans 786 residues: Endonuclease MutS2 (786 aa).

Position 332-339 (332-339 (GPNTGGKT)) interacts with ATP. Positions 711–786 (IDLRGMDSEE…GTGVTVVILK (76 aa)) constitute a Smr domain.

It belongs to the DNA mismatch repair MutS family. MutS2 subfamily. In terms of assembly, homodimer. Binds to stalled ribosomes, contacting rRNA.

In terms of biological role, endonuclease that is involved in the suppression of homologous recombination and thus may have a key role in the control of bacterial genetic diversity. Acts as a ribosome collision sensor, splitting the ribosome into its 2 subunits. Detects stalled/collided 70S ribosomes which it binds and splits by an ATP-hydrolysis driven conformational change. Acts upstream of the ribosome quality control system (RQC), a ribosome-associated complex that mediates the extraction of incompletely synthesized nascent chains from stalled ribosomes and their subsequent degradation. Probably generates substrates for RQC. This chain is Endonuclease MutS2, found in Clostridium perfringens (strain 13 / Type A).